Consider the following 390-residue polypeptide: Oxygen-dependent coproporphyrinogen-III oxidase (390 aa).

Positions 131 to 140 are important for dimerization; the sequence is VLQDGDVFEK. Residue Ser181 participates in substrate binding. His195 functions as the Proton donor in the catalytic mechanism. Substrate is bound by residues 197–199 and 348–353; these read NYR and GARYES. An important for dimerization region spans residues 329-365; sequence YVEFNLIYDRGTKFGLYTPGARYESILMSLPLHARWE.

This sequence belongs to the aerobic coproporphyrinogen-III oxidase family. In terms of assembly, homodimer.

The catalysed reaction is coproporphyrinogen III + O2 + 2 H(+) = protoporphyrinogen IX + 2 CO2 + 2 H2O. Its pathway is porphyrin-containing compound metabolism; protoporphyrin-IX biosynthesis; protoporphyrinogen-IX from coproporphyrinogen-III (O2 route): step 1/1. In terms of biological role, involved in the heme biosynthesis. Catalyzes the aerobic oxidative decarboxylation of propionate groups of rings A and B of coproporphyrinogen-III to yield the vinyl groups in protoporphyrinogen-IX. The polypeptide is Oxygen-dependent coproporphyrinogen-III oxidase (Coprox) (Drosophila melanogaster (Fruit fly)).